Here is a 563-residue protein sequence, read N- to C-terminus: MDKITVEVIKSSTSYIAEEMGIILRNTAYSPNIKDRLDFSCAILSSNGELIAQAEHIPVHLGSMAIGVKNTVDYLKKESIEIEKDDVIIVNDPYIAGTHLNDITLLKPIFYNDEIIGYVANKAHHVDVGGYAPGSISSNVKELYHEGLIIPPSKLVINGKLNKELLNLITSNVRVPKSTIGDLKAQIASLNIGVERILKLIEKYGDREVTEAWNKSLDYSEEYLKSKIRDINCICEAVDYLEYKDKLININMKIEIKNGKIKVDFTGTHRQLDAPLNAVYGVTVASTSFALKAVIDPDLPMNHGIFRVLNIIAPEETIVNPKKPAPVSVGNVETSQRIVDVIFKALYHEFPDRVPAASNGSMNNVIIGGRGWAFYETIGGGFGGRNGKDGVDGVHANMTNTLNTPIEVIENEYPIMILEYSLREDSGGAGKYRGGLGIRRVYKMLSDCMLSIIADRIKISPWGVNNGYSGACGEHYVIKDGKKIPLSGKDTLYLSCGDIVEINTPGGGGYGSPYERDINLILEDVKDEKISIKSAYRDYKVKIIKKDDDFVVDMEETKKLRGL.

It belongs to the HyuB family.

This is an uncharacterized protein from Methanocaldococcus jannaschii (strain ATCC 43067 / DSM 2661 / JAL-1 / JCM 10045 / NBRC 100440) (Methanococcus jannaschii).